The chain runs to 275 residues: Thiazole synthase (275 aa).

The active-site Schiff-base intermediate with DXP is the Lys-116. Residues Gly-177, 203–204, and 225–226 contribute to the 1-deoxy-D-xylulose 5-phosphate site; these read AG and NT.

It belongs to the ThiG family. As to quaternary structure, homotetramer. Forms heterodimers with either ThiH or ThiS.

Its subcellular location is the cytoplasm. The enzyme catalyses [ThiS sulfur-carrier protein]-C-terminal-Gly-aminoethanethioate + 2-iminoacetate + 1-deoxy-D-xylulose 5-phosphate = [ThiS sulfur-carrier protein]-C-terminal Gly-Gly + 2-[(2R,5Z)-2-carboxy-4-methylthiazol-5(2H)-ylidene]ethyl phosphate + 2 H2O + H(+). Its pathway is cofactor biosynthesis; thiamine diphosphate biosynthesis. In terms of biological role, catalyzes the rearrangement of 1-deoxy-D-xylulose 5-phosphate (DXP) to produce the thiazole phosphate moiety of thiamine. Sulfur is provided by the thiocarboxylate moiety of the carrier protein ThiS. In vitro, sulfur can be provided by H(2)S. The sequence is that of Thiazole synthase from Acaryochloris marina (strain MBIC 11017).